The sequence spans 53 residues: Large ribosomal subunit protein eL24 (53 aa).

Cys-4, Cys-7, Cys-30, and Cys-34 together coordinate Zn(2+). The segment at Cys-4–Cys-34 adopts a C4-type zinc-finger fold.

Belongs to the eukaryotic ribosomal protein eL24 family. As to quaternary structure, part of the 50S ribosomal subunit. Forms a cluster with proteins L3 and L14. It depends on Zn(2+) as a cofactor.

In terms of biological role, binds to the 23S rRNA. The protein is Large ribosomal subunit protein eL24 of Methanothermobacter thermautotrophicus (strain ATCC 29096 / DSM 1053 / JCM 10044 / NBRC 100330 / Delta H) (Methanobacterium thermoautotrophicum).